The sequence spans 651 residues: Acetyl-coenzyme A synthetase (651 aa).

Residues 191 to 194, Thr311, and Asn335 each bind CoA; that span reads RGGK. ATP-binding positions include 387-389, 411-416, Asp500, and Arg515; these read GEP and DTWWQT. Position 523 (Ser523) interacts with CoA. Arg526 contacts ATP. Residues Val537, His539, and Val542 each contribute to the Mg(2+) site. Arg584 serves as a coordination point for CoA. Lys609 bears the N6-acetyllysine mark.

Belongs to the ATP-dependent AMP-binding enzyme family. The cofactor is Mg(2+). Post-translationally, acetylated. Deacetylation by the SIR2-homolog deacetylase activates the enzyme.

The enzyme catalyses acetate + ATP + CoA = acetyl-CoA + AMP + diphosphate. In terms of biological role, catalyzes the conversion of acetate into acetyl-CoA (AcCoA), an essential intermediate at the junction of anabolic and catabolic pathways. AcsA undergoes a two-step reaction. In the first half reaction, AcsA combines acetate with ATP to form acetyl-adenylate (AcAMP) intermediate. In the second half reaction, it can then transfer the acetyl group from AcAMP to the sulfhydryl group of CoA, forming the product AcCoA. This is Acetyl-coenzyme A synthetase from Pseudomonas syringae pv. tomato (strain ATCC BAA-871 / DC3000).